A 901-amino-acid polypeptide reads, in one-letter code: HTH-type transcriptional regulator MalT (901 aa).

An ATP-binding site is contributed by Ser39–Thr46. The 66-residue stretch at Glu829–Leu894 folds into the HTH luxR-type domain. Positions Asn853–Arg872 form a DNA-binding region, H-T-H motif.

Belongs to the MalT family. As to quaternary structure, monomer in solution. Oligomerizes to an active state in the presence of the positive effectors ATP and maltotriose.

Activated by ATP and maltotriose, which are both required for DNA binding. In terms of biological role, positively regulates the transcription of the maltose regulon whose gene products are responsible for uptake and catabolism of malto-oligosaccharides. Specifically binds to the promoter region of its target genes, recognizing a short DNA motif called the MalT box. This is HTH-type transcriptional regulator MalT from Shigella sonnei (strain Ss046).